Here is a 325-residue protein sequence, read N- to C-terminus: Probable 2-ketogluconate reductase (325 aa).

NAD(+) contacts are provided by residues 158–159 (RI), Thr211, 238–240 (ISR), and Asp264. Arg240 is a catalytic residue. The active site involves Glu269. His288 serves as the catalytic Proton donor. 288–291 (HIGS) is an NAD(+) binding site.

Belongs to the D-isomer specific 2-hydroxyacid dehydrogenase family.

The catalysed reaction is D-gluconate + NADP(+) = 2-dehydro-D-gluconate + NADPH + H(+). In Bacillus subtilis (strain 168), this protein is Probable 2-ketogluconate reductase (yvcT).